Reading from the N-terminus, the 448-residue chain is Homogentisate 1,2-dioxygenase (448 aa).

Histidine 303 (proton acceptor) is an active-site residue. Residues histidine 346 and glutamate 352 each coordinate Fe cation. Residues tyrosine 361 and histidine 382 each coordinate homogentisate. Histidine 382 is a binding site for Fe cation.

It belongs to the homogentisate dioxygenase family. As to quaternary structure, hexamer; dimer of trimers. Requires Fe cation as cofactor.

The enzyme catalyses homogentisate + O2 = 4-maleylacetoacetate + H(+). Its pathway is amino-acid degradation; L-phenylalanine degradation; acetoacetate and fumarate from L-phenylalanine: step 4/6. Involved in the catabolism of homogentisate (2,5-dihydroxyphenylacetate or 2,5-OH-PhAc), a central intermediate in the degradation of phenylalanine and tyrosine. Catalyzes the oxidative ring cleavage of the aromatic ring of homogentisate to yield maleylacetoacetate. The protein is Homogentisate 1,2-dioxygenase of Rhodopseudomonas palustris (strain HaA2).